A 422-amino-acid polypeptide reads, in one-letter code: Dihydroorotase (422 aa).

Zn(2+)-binding residues include His59 and His61. Substrate is bound by residues 61–63 (HFR) and Asn93. The Zn(2+) site is built by Asp150, His177, and His230. A substrate-binding site is contributed by Asn276. Asp303 contributes to the Zn(2+) binding site. The active site involves Asp303. Substrate is bound at residue His307.

Belongs to the metallo-dependent hydrolases superfamily. DHOase family. Class I DHOase subfamily. The cofactor is Zn(2+).

The enzyme catalyses (S)-dihydroorotate + H2O = N-carbamoyl-L-aspartate + H(+). It participates in pyrimidine metabolism; UMP biosynthesis via de novo pathway; (S)-dihydroorotate from bicarbonate: step 3/3. Its function is as follows. Catalyzes the reversible cyclization of carbamoyl aspartate to dihydroorotate. This is Dihydroorotase from Streptococcus pneumoniae serotype 4 (strain ATCC BAA-334 / TIGR4).